A 582-amino-acid polypeptide reads, in one-letter code: Aspartate--tRNA ligase (582 aa).

Position 174 (glutamate 174) interacts with L-aspartate. The tract at residues 198 to 201 (QITK) is aspartate. An L-aspartate-binding site is contributed by arginine 220. Residues 220-222 (RDE) and glutamine 229 contribute to the ATP site. Residue histidine 443 coordinates L-aspartate. ATP is bound at residue glutamate 477. Arginine 484 contributes to the L-aspartate binding site. 529 to 532 (GLDR) contacts ATP.

This sequence belongs to the class-II aminoacyl-tRNA synthetase family. Type 1 subfamily. In terms of assembly, homodimer.

It is found in the cytoplasm. It carries out the reaction tRNA(Asp) + L-aspartate + ATP = L-aspartyl-tRNA(Asp) + AMP + diphosphate. In terms of biological role, catalyzes the attachment of L-aspartate to tRNA(Asp) in a two-step reaction: L-aspartate is first activated by ATP to form Asp-AMP and then transferred to the acceptor end of tRNA(Asp). The chain is Aspartate--tRNA ligase from Streptococcus equi subsp. zooepidemicus (strain MGCS10565).